A 346-amino-acid polypeptide reads, in one-letter code: Probable 3-hydroxyacyl-CoA dehydrogenase (346 aa).

Positions 322 to 346 (RANLSPSATPCTPWKARKATSCAPP) are disordered.

Belongs to the 3-hydroxyacyl-CoA dehydrogenase family.

It carries out the reaction a (3S)-3-hydroxyacyl-CoA + NAD(+) = a 3-oxoacyl-CoA + NADH + H(+). This Deinococcus radiodurans (strain ATCC 13939 / DSM 20539 / JCM 16871 / CCUG 27074 / LMG 4051 / NBRC 15346 / NCIMB 9279 / VKM B-1422 / R1) protein is Probable 3-hydroxyacyl-CoA dehydrogenase.